The chain runs to 79 residues: Conotoxin Leo-O1 (79 aa).

The N-terminal stretch at 1–22 (MKLTCMMLVAVLFLTAWTFVTA) is a signal peptide. A propeptide spanning residues 23-51 (NVSRNGLENLFPEERHEMMNPEAAKLNNR) is cleaved from the precursor. 3 disulfides stabilise this stretch: cysteine 53–cysteine 70, cysteine 60–cysteine 74, and cysteine 69–cysteine 78.

Belongs to the conotoxin O1 superfamily. Expressed by the venom duct.

The protein localises to the secreted. The chain is Conotoxin Leo-O1 from Conus leopardus (Leopard cone).